Reading from the N-terminus, the 353-residue chain is Putative glycosyltransferase TagX (353 aa).

Belongs to the glycosyltransferase 2 family.

The sequence is that of Putative glycosyltransferase TagX (tagX) from Staphylococcus aureus (strain MSSA476).